The chain runs to 632 residues: Chaperone protein DnaK (632 aa).

At T198 the chain carries Phosphothreonine; by autocatalysis. The disordered stretch occupies residues 524-557 (RREAVDAKNHADSLVHSTEKALAEHGSKIEDSER).

Belongs to the heat shock protein 70 family.

Acts as a chaperone. The polypeptide is Chaperone protein DnaK (Nitrobacter hamburgensis (strain DSM 10229 / NCIMB 13809 / X14)).